Here is a 179-residue protein sequence, read N- to C-terminus: Large ribosomal subunit protein uL5 (179 aa).

Belongs to the universal ribosomal protein uL5 family. Part of the 50S ribosomal subunit; part of the 5S rRNA/L5/L18/L25 subcomplex. Contacts the 5S rRNA and the P site tRNA. Forms a bridge to the 30S subunit in the 70S ribosome.

Functionally, this is one of the proteins that bind and probably mediate the attachment of the 5S RNA into the large ribosomal subunit, where it forms part of the central protuberance. In the 70S ribosome it contacts protein S13 of the 30S subunit (bridge B1b), connecting the 2 subunits; this bridge is implicated in subunit movement. Contacts the P site tRNA; the 5S rRNA and some of its associated proteins might help stabilize positioning of ribosome-bound tRNAs. This chain is Large ribosomal subunit protein uL5, found in Dictyoglomus thermophilum (strain ATCC 35947 / DSM 3960 / H-6-12).